Reading from the N-terminus, the 45-residue chain is Pollen allergen Amb a 5 (45 aa).

Disulfide bonds link Cys4/Cys39, Cys11/Cys26, Cys18/Cys32, and Cys19/Cys43.

Monomer.

The polypeptide is Pollen allergen Amb a 5 (Ambrosia artemisiifolia var. elatior (Short ragweed)).